Here is an 88-residue protein sequence, read N- to C-terminus: Protein A19 homolog (88 aa).

Positions 1 to 28 are disordered; the sequence is MADSTAGAKKRKKRSTSATSTRKEPPTV.

It belongs to the chordopoxvirinae A19 family.

This chain is Protein A19 homolog, found in Fowlpox virus (strain NVSL) (FPV).